We begin with the raw amino-acid sequence, 606 residues long: 4-hydroxy-3-methylbut-2-en-1-yl diphosphate synthase (flavodoxin) (606 aa).

[4Fe-4S] cluster is bound by residues C513, C516, C547, and E554.

This sequence belongs to the IspG family. [4Fe-4S] cluster is required as a cofactor.

The catalysed reaction is (2E)-4-hydroxy-3-methylbut-2-enyl diphosphate + oxidized [flavodoxin] + H2O + 2 H(+) = 2-C-methyl-D-erythritol 2,4-cyclic diphosphate + reduced [flavodoxin]. It functions in the pathway isoprenoid biosynthesis; isopentenyl diphosphate biosynthesis via DXP pathway; isopentenyl diphosphate from 1-deoxy-D-xylulose 5-phosphate: step 5/6. Its function is as follows. Converts 2C-methyl-D-erythritol 2,4-cyclodiphosphate (ME-2,4cPP) into 1-hydroxy-2-methyl-2-(E)-butenyl 4-diphosphate. The chain is 4-hydroxy-3-methylbut-2-en-1-yl diphosphate synthase (flavodoxin) from Chlamydia caviae (strain ATCC VR-813 / DSM 19441 / 03DC25 / GPIC) (Chlamydophila caviae).